A 154-amino-acid polypeptide reads, in one-letter code: Transcriptional repressor NrdR (154 aa).

The interval methionine 1–asparagine 22 is disordered. The segment at cysteine 3–cysteine 34 is a zinc-finger region. Residues leucine 49 to glycine 139 enclose the ATP-cone domain.

It belongs to the NrdR family. Requires Zn(2+) as cofactor.

Its function is as follows. Negatively regulates transcription of bacterial ribonucleotide reductase nrd genes and operons by binding to NrdR-boxes. In Lactobacillus gasseri (strain ATCC 33323 / DSM 20243 / BCRC 14619 / CIP 102991 / JCM 1131 / KCTC 3163 / NCIMB 11718 / NCTC 13722 / AM63), this protein is Transcriptional repressor NrdR.